We begin with the raw amino-acid sequence, 252 residues long: Probable phosphatase SO_1652 (252 aa).

Zn(2+)-binding residues include His8, His10, His16, His41, Glu74, His102, His132, Asp193, and His195.

The protein belongs to the PHP family. It depends on Zn(2+) as a cofactor.

The chain is Probable phosphatase SO_1652 from Shewanella oneidensis (strain ATCC 700550 / JCM 31522 / CIP 106686 / LMG 19005 / NCIMB 14063 / MR-1).